Reading from the N-terminus, the 38-residue chain is Trypsin inhibitor 2 (38 aa).

Gln1 carries the post-translational modification Pyrrolidone carboxylic acid.

Contains disulfide bonds.

In terms of biological role, inhibits trypsin-like proteases from the guts of the insect pests P.truncatus, P.americana, Acheta sp and Gryllus sp. The polypeptide is Trypsin inhibitor 2 (Opuntia streptacantha (Prickly pear cactus)).